The primary structure comprises 445 residues: Glycine--tRNA ligase (445 aa).

Substrate is bound by residues Lys-97 and Glu-145. ATP contacts are provided by residues 177-179, 187-192, 262-263, and 308-311; these read RNE, FRTCEF, EI, and GLTR. Residue 192–196 participates in substrate binding; the sequence is FEQME. Residue 304–308 coordinates substrate; the sequence is ETSLG.

Belongs to the class-II aminoacyl-tRNA synthetase family. As to quaternary structure, homodimer.

The protein localises to the cytoplasm. It catalyses the reaction tRNA(Gly) + glycine + ATP = glycyl-tRNA(Gly) + AMP + diphosphate. In terms of biological role, catalyzes the attachment of glycine to tRNA(Gly). The polypeptide is Glycine--tRNA ligase (Borrelia hermsii (strain HS1 / DAH)).